The following is a 475-amino-acid chain: Aspartyl/glutamyl-tRNA(Asn/Gln) amidotransferase subunit B (475 aa).

The protein belongs to the GatB/GatE family. GatB subfamily. Heterotrimer of A, B and C subunits.

It carries out the reaction L-glutamyl-tRNA(Gln) + L-glutamine + ATP + H2O = L-glutaminyl-tRNA(Gln) + L-glutamate + ADP + phosphate + H(+). The enzyme catalyses L-aspartyl-tRNA(Asn) + L-glutamine + ATP + H2O = L-asparaginyl-tRNA(Asn) + L-glutamate + ADP + phosphate + 2 H(+). In terms of biological role, allows the formation of correctly charged Asn-tRNA(Asn) or Gln-tRNA(Gln) through the transamidation of misacylated Asp-tRNA(Asn) or Glu-tRNA(Gln) in organisms which lack either or both of asparaginyl-tRNA or glutaminyl-tRNA synthetases. The reaction takes place in the presence of glutamine and ATP through an activated phospho-Asp-tRNA(Asn) or phospho-Glu-tRNA(Gln). The chain is Aspartyl/glutamyl-tRNA(Asn/Gln) amidotransferase subunit B from Thiobacillus denitrificans (strain ATCC 25259 / T1).